The primary structure comprises 351 residues: uncharacterized protein (351 aa).

This sequence belongs to the bacterial luciferase oxidoreductase family.

This is an uncharacterized protein from Sinorhizobium fredii (strain NBRC 101917 / NGR234).